We begin with the raw amino-acid sequence, 1368 residues long: DNA-directed RNA polymerase subunit beta (1368 aa).

This sequence belongs to the RNA polymerase beta chain family. The RNAP catalytic core consists of 2 alpha, 1 beta, 1 beta' and 1 omega subunit. When a sigma factor is associated with the core the holoenzyme is formed, which can initiate transcription.

It carries out the reaction RNA(n) + a ribonucleoside 5'-triphosphate = RNA(n+1) + diphosphate. DNA-dependent RNA polymerase catalyzes the transcription of DNA into RNA using the four ribonucleoside triphosphates as substrates. This Burkholderia multivorans (strain ATCC 17616 / 249) protein is DNA-directed RNA polymerase subunit beta.